A 441-amino-acid chain; its full sequence is Ribosomal protein uS12 methylthiotransferase RimO (441 aa).

The region spanning 8–118 (PKIGFVSLGC…VLEHVHHYVP (111 aa)) is the MTTase N-terminal domain. [4Fe-4S] cluster is bound by residues cysteine 17, cysteine 53, cysteine 82, cysteine 150, cysteine 154, and cysteine 157. In terms of domain architecture, Radical SAM core spans 136 to 373 (LTPRHYAYLK…MQLQQQISAE (238 aa)). In terms of domain architecture, TRAM spans 376–441 (QEKVGREILV…DEYDLWGSRV (66 aa)).

Belongs to the methylthiotransferase family. RimO subfamily. [4Fe-4S] cluster is required as a cofactor.

Its subcellular location is the cytoplasm. It catalyses the reaction L-aspartate(89)-[ribosomal protein uS12]-hydrogen + (sulfur carrier)-SH + AH2 + 2 S-adenosyl-L-methionine = 3-methylsulfanyl-L-aspartate(89)-[ribosomal protein uS12]-hydrogen + (sulfur carrier)-H + 5'-deoxyadenosine + L-methionine + A + S-adenosyl-L-homocysteine + 2 H(+). Catalyzes the methylthiolation of an aspartic acid residue of ribosomal protein uS12. This chain is Ribosomal protein uS12 methylthiotransferase RimO, found in Shigella boydii serotype 18 (strain CDC 3083-94 / BS512).